The chain runs to 1129 residues: Protein DWARF 53-LIKE (1129 aa).

The region spanning 8–180 is the Clp R domain; sequence ARQCLSPAAV…KLAILRPAPP (173 aa). 2 repeat regions span residues 12 to 85 and 102 to 180; these read LSPA…LDRL and VSNS…PAPP. The disordered stretch occupies residues 519 to 573; it reads RYIGVPADKERSANPSKGSESIGVQKDVIKPCAVSAVHSSSTARPISSPSVTNKR. The segment covering 557-568 has biased composition (low complexity); sequence SSSTARPISSPS. An EAR 1 motif is present at residues 577-581; sequence LVLNL. The disordered stretch occupies residues 587–654; sequence KSDENLQERG…KRVEDSERSV (68 aa). The segment covering 596-608 has biased composition (polar residues); it reads GMQSQHGTLSNAD. The segment covering 645 to 654 has biased composition (basic and acidic residues); sequence KRVEDSERSV. Short sequence motifs (EAR) lie at residues 798–802 and 975–980; these read LDLNL and FDLNLP. The tract at residues 975 to 1001 is disordered; the sequence is FDLNLPVDEDEPFDADDDSSSHENSYG. Positions 981–992 are enriched in acidic residues; that stretch reads VDEDEPFDADDD.

This sequence belongs to the ClpA/ClpB family. Post-translationally, polyubiquitinated. Strigolactone, but not karrikin, triggers rapid SCF(D3)-dependent degradation via the proteasome.

In terms of biological role, repressor of strigolactones (SL) signaling. Subjected to a negative feedback control of SL signaling. This chain is Protein DWARF 53-LIKE, found in Oryza sativa subsp. japonica (Rice).